A 511-amino-acid polypeptide reads, in one-letter code: Maturase K (511 aa).

This sequence belongs to the intron maturase 2 family. MatK subfamily.

Its subcellular location is the plastid. It is found in the chloroplast. In terms of biological role, usually encoded in the trnK tRNA gene intron. Probably assists in splicing its own and other chloroplast group II introns. This is Maturase K from Oryza nivara (Indian wild rice).